We begin with the raw amino-acid sequence, 373 residues long: UDP-N-acetylglucosamine--N-acetylmuramyl-(pentapeptide) pyrophosphoryl-undecaprenol N-acetylglucosamine transferase (373 aa).

UDP-N-acetyl-alpha-D-glucosamine is bound by residues 13 to 15 (TGG), Asn124, Arg164, Ser192, and Gln293.

Belongs to the glycosyltransferase 28 family. MurG subfamily.

It localises to the cell inner membrane. The enzyme catalyses di-trans,octa-cis-undecaprenyl diphospho-N-acetyl-alpha-D-muramoyl-L-alanyl-D-glutamyl-meso-2,6-diaminopimeloyl-D-alanyl-D-alanine + UDP-N-acetyl-alpha-D-glucosamine = di-trans,octa-cis-undecaprenyl diphospho-[N-acetyl-alpha-D-glucosaminyl-(1-&gt;4)]-N-acetyl-alpha-D-muramoyl-L-alanyl-D-glutamyl-meso-2,6-diaminopimeloyl-D-alanyl-D-alanine + UDP + H(+). It participates in cell wall biogenesis; peptidoglycan biosynthesis. Functionally, cell wall formation. Catalyzes the transfer of a GlcNAc subunit on undecaprenyl-pyrophosphoryl-MurNAc-pentapeptide (lipid intermediate I) to form undecaprenyl-pyrophosphoryl-MurNAc-(pentapeptide)GlcNAc (lipid intermediate II). The sequence is that of UDP-N-acetylglucosamine--N-acetylmuramyl-(pentapeptide) pyrophosphoryl-undecaprenol N-acetylglucosamine transferase from Allorhizobium ampelinum (strain ATCC BAA-846 / DSM 112012 / S4) (Agrobacterium vitis (strain S4)).